The sequence spans 868 residues: Leucine--tRNA ligase (868 aa).

The 'HIGH' region motif lies at 42–52 (PYPSGKLHMGH). A 'KMSKS' region motif is present at residues 627-631 (KMSKS). Lysine 630 is an ATP binding site.

It belongs to the class-I aminoacyl-tRNA synthetase family.

It localises to the cytoplasm. It carries out the reaction tRNA(Leu) + L-leucine + ATP = L-leucyl-tRNA(Leu) + AMP + diphosphate. The protein is Leucine--tRNA ligase of Pseudomonas entomophila (strain L48).